A 44-amino-acid chain; its full sequence is Photosystem I reaction center subunit IX (44 aa).

A helical membrane pass occupies residues 7-27 (YLSTAPVLAISWLIFVAGLLI).

Belongs to the PsaJ family.

It localises to the plastid. It is found in the chloroplast thylakoid membrane. Functionally, may help in the organization of the PsaE and PsaF subunits. This is Photosystem I reaction center subunit IX from Larix decidua (European larch).